The primary structure comprises 192 residues: Xanthine phosphoribosyltransferase (192 aa).

Positions 20 and 27 each coordinate xanthine. 128-132 lines the 5-phospho-alpha-D-ribose 1-diphosphate pocket; sequence ANGDA. Lys156 lines the xanthine pocket.

The protein belongs to the purine/pyrimidine phosphoribosyltransferase family. Xpt subfamily. As to quaternary structure, homodimer.

Its subcellular location is the cytoplasm. It carries out the reaction XMP + diphosphate = xanthine + 5-phospho-alpha-D-ribose 1-diphosphate. It functions in the pathway purine metabolism; XMP biosynthesis via salvage pathway; XMP from xanthine: step 1/1. In terms of biological role, converts the preformed base xanthine, a product of nucleic acid breakdown, to xanthosine 5'-monophosphate (XMP), so it can be reused for RNA or DNA synthesis. This is Xanthine phosphoribosyltransferase from Staphylococcus carnosus (strain TM300).